Reading from the N-terminus, the 194-residue chain is Porimin (194 aa).

Residues 1-24 (MALCARAALLLGALQVLALPGAVA) form the signal peptide. Topologically, residues 25–151 (QETYAQGSPS…PTKGKGSKFD (127 aa)) are extracellular. Residues Asn-36, Asn-47, Asn-51, Asn-59, Asn-76, and Asn-114 are each glycosylated (N-linked (GlcNAc...) asparagine). A disordered region spans residues 88–124 (KVSTPGVSPHVTPSASKSTPKTSASPNSTQTSASMTT). A compositionally biased stretch (low complexity) spans 99–124 (TPSASKSTPKTSASPNSTQTSASMTT). The helical transmembrane segment at 152 to 172 (AGSFVGGIVLTLGVLSILYIG) threads the bilayer. Topologically, residues 173-194 (CKMYYSRRGIRYRSIDEHDAII) are cytoplasmic. The residue at position 186 (Ser-186) is a Phosphoserine.

Belongs to the CD164 family.

Its subcellular location is the membrane. Implicated in oncotic cell death, characterized by cell swelling, organelle swelling, vacuolization and increased membrane permeability. The protein is Porimin (Tmem123) of Rattus norvegicus (Rat).